Reading from the N-terminus, the 143-residue chain is Transcriptional regulator MraZ (143 aa).

SpoVT-AbrB domains lie at 5–47 (EYHH…PMQG) and 76–119 (ATEC…SRSR).

This sequence belongs to the MraZ family. In terms of assembly, forms oligomers.

It localises to the cytoplasm. The protein resides in the nucleoid. The sequence is that of Transcriptional regulator MraZ from Moorella thermoacetica (strain ATCC 39073 / JCM 9320).